The chain runs to 229 residues: Peptidase E (229 aa).

Catalysis depends on charge relay system residues serine 120, aspartate 135, and histidine 157.

This sequence belongs to the peptidase S51 family.

It is found in the cytoplasm. The catalysed reaction is Dipeptidase E catalyzes the hydrolysis of dipeptides Asp-|-Xaa. It does not act on peptides with N-terminal Glu, Asn or Gln, nor does it cleave isoaspartyl peptides.. Its function is as follows. Hydrolyzes dipeptides containing N-terminal aspartate residues. May play a role in allowing the cell to use peptide aspartate to spare carbon otherwise required for the synthesis of the aspartate family of amino acids. In Escherichia coli O6:K15:H31 (strain 536 / UPEC), this protein is Peptidase E.